Consider the following 939-residue polypeptide: Translation initiation factor IF-2 (939 aa).

Positions 48 to 355 are disordered; sequence KFAPAPKVEN…KPEKKEKEEE (308 aa). Positions 79–93 are enriched in low complexity; sequence QQNQAPKQPQQGTQN. Over residues 114 to 130 the composition is skewed to basic and acidic residues; that stretch reads SRDKNSRRDNNNRDGQR. A compositionally biased stretch (low complexity) spans 131–257; the sequence is DNNGGYRNND…NNDRNNNGGF (127 aa). Residues 287-355 are compositionally biased toward basic and acidic residues; sequence RNNDRRDSAP…KPEKKEKEEE (69 aa). Positions 440–609 constitute a tr-type G domain; that stretch reads PRPPVVCVMG…LLTAEVNELK (170 aa). Residues 449 to 456 are G1; it reads GHVDHGKT. 449–456 lines the GTP pocket; the sequence is GHVDHGKT. Residues 474-478 form a G2 region; sequence GITQK. A G3 region spans residues 495–498; it reads DTPG. GTP is bound by residues 495–499 and 549–552; these read DTPGH and NKID. The segment at 549-552 is G4; it reads NKID. The interval 585-587 is G5; the sequence is SAH.

Belongs to the TRAFAC class translation factor GTPase superfamily. Classic translation factor GTPase family. IF-2 subfamily.

It is found in the cytoplasm. One of the essential components for the initiation of protein synthesis. Protects formylmethionyl-tRNA from spontaneous hydrolysis and promotes its binding to the 30S ribosomal subunits. Also involved in the hydrolysis of GTP during the formation of the 70S ribosomal complex. The polypeptide is Translation initiation factor IF-2 (Lachnospira eligens (strain ATCC 27750 / DSM 3376 / VPI C15-48 / C15-B4) (Eubacterium eligens)).